The primary structure comprises 246 residues: tRNA pseudouridine synthase A (246 aa).

D52 functions as the Nucleophile in the catalytic mechanism. Y111 is a substrate binding site.

The protein belongs to the tRNA pseudouridine synthase TruA family. As to quaternary structure, homodimer.

The catalysed reaction is uridine(38/39/40) in tRNA = pseudouridine(38/39/40) in tRNA. Functionally, formation of pseudouridine at positions 38, 39 and 40 in the anticodon stem and loop of transfer RNAs. The sequence is that of tRNA pseudouridine synthase A from Borreliella burgdorferi (strain ATCC 35210 / DSM 4680 / CIP 102532 / B31) (Borrelia burgdorferi).